The sequence spans 353 residues: Photosystem II D2 protein (353 aa).

Thr-2 is subject to N-acetylthreonine. Residue Thr-2 is modified to Phosphothreonine. Residues 41 to 61 traverse the membrane as a helical segment; it reads CAYFALGGWFTGTTFVTSWYT. Residue His-118 coordinates chlorophyll a. A helical membrane pass occupies residues 125–141; that stretch reads GFMLRQFELARSVQLRP. Pheophytin a is bound by residues Gln-130 and Asn-143. Residues 153-166 form a helical membrane-spanning segment; it reads VFVSVFLIYPLGQS. Chlorophyll a is bound at residue His-198. A helical membrane pass occupies residues 208 to 228; the sequence is AALLCAIHGATVENTLFEDGD. 2 residues coordinate a plastoquinone: His-215 and Phe-262. His-215 contributes to the Fe cation binding site. Position 269 (His-269) interacts with Fe cation. A helical transmembrane segment spans residues 279 to 295; that stretch reads GLWMSALGVVGLALNLR.

It belongs to the reaction center PufL/M/PsbA/D family. As to quaternary structure, PSII is composed of 1 copy each of membrane proteins PsbA, PsbB, PsbC, PsbD, PsbE, PsbF, PsbH, PsbI, PsbJ, PsbK, PsbL, PsbM, PsbT, PsbX, PsbY, PsbZ, Psb30/Ycf12, at least 3 peripheral proteins of the oxygen-evolving complex and a large number of cofactors. It forms dimeric complexes. The D1/D2 heterodimer binds P680, chlorophylls that are the primary electron donor of PSII, and subsequent electron acceptors. It shares a non-heme iron and each subunit binds pheophytin, quinone, additional chlorophylls, carotenoids and lipids. There is also a Cl(-1) ion associated with D1 and D2, which is required for oxygen evolution. The PSII complex binds additional chlorophylls, carotenoids and specific lipids. is required as a cofactor.

Its subcellular location is the plastid. It is found in the chloroplast thylakoid membrane. The enzyme catalyses 2 a plastoquinone + 4 hnu + 2 H2O = 2 a plastoquinol + O2. Its function is as follows. Photosystem II (PSII) is a light-driven water:plastoquinone oxidoreductase that uses light energy to abstract electrons from H(2)O, generating O(2) and a proton gradient subsequently used for ATP formation. It consists of a core antenna complex that captures photons, and an electron transfer chain that converts photonic excitation into a charge separation. The D1/D2 (PsbA/PsbD) reaction center heterodimer binds P680, the primary electron donor of PSII as well as several subsequent electron acceptors. D2 is needed for assembly of a stable PSII complex. In Chloranthus spicatus (Chulantree), this protein is Photosystem II D2 protein.